The sequence spans 366 residues: tRNA/tmRNA (uracil-C(5))-methyltransferase (366 aa).

S-adenosyl-L-methionine is bound by residues glutamine 189, tyrosine 217, asparagine 222, glutamate 238, and aspartate 298. Cysteine 323 acts as the Nucleophile in catalysis. Glutamate 357 acts as the Proton acceptor in catalysis.

This sequence belongs to the class I-like SAM-binding methyltransferase superfamily. RNA M5U methyltransferase family. TrmA subfamily.

It carries out the reaction uridine(54) in tRNA + S-adenosyl-L-methionine = 5-methyluridine(54) in tRNA + S-adenosyl-L-homocysteine + H(+). The enzyme catalyses uridine(341) in tmRNA + S-adenosyl-L-methionine = 5-methyluridine(341) in tmRNA + S-adenosyl-L-homocysteine + H(+). Its function is as follows. Dual-specificity methyltransferase that catalyzes the formation of 5-methyluridine at position 54 (m5U54) in all tRNAs, and that of position 341 (m5U341) in tmRNA (transfer-mRNA). In Shewanella putrefaciens (strain CN-32 / ATCC BAA-453), this protein is tRNA/tmRNA (uracil-C(5))-methyltransferase.